A 294-amino-acid polypeptide reads, in one-letter code: N-acetylmuramic acid 6-phosphate etherase (294 aa).

In terms of domain architecture, SIS spans 54 to 217 (VIQSFEEEGR…STASMIGVGK (164 aa)). Glu82 (proton donor) is an active-site residue. Glu113 is a catalytic residue.

Belongs to the GCKR-like family. MurNAc-6-P etherase subfamily. As to quaternary structure, homodimer.

It carries out the reaction N-acetyl-D-muramate 6-phosphate + H2O = N-acetyl-D-glucosamine 6-phosphate + (R)-lactate. The protein operates within amino-sugar metabolism; N-acetylmuramate degradation. In terms of biological role, specifically catalyzes the cleavage of the D-lactyl ether substituent of MurNAc 6-phosphate, producing GlcNAc 6-phosphate and D-lactate. This Bacillus cereus (strain ZK / E33L) protein is N-acetylmuramic acid 6-phosphate etherase.